A 56-amino-acid polypeptide reads, in one-letter code: Large ribosomal subunit protein bL33c (56 aa).

This sequence belongs to the bacterial ribosomal protein bL33 family.

Its subcellular location is the plastid. It is found in the chloroplast. This is Large ribosomal subunit protein bL33c (rpl33) from Guillardia theta (Cryptophyte).